The following is a 780-amino-acid chain: Cullin-5 (780 aa).

At serine 34 the chain carries Phosphoserine. At threonine 210 the chain carries Phosphothreonine. The Cullin neddylation domain occupies 711–772 (RILRTQEAII…HKYIRRDESD (62 aa)). A Glycyl lysine isopeptide (Lys-Gly) (interchain with G-Cter in NEDD8) cross-link involves residue lysine 724.

It belongs to the cullin family. As to quaternary structure, component of multiple cullin-5-RING E3 ubiquitin-protein ligase complexes (ECS complexes, also named CRL5 complexes) formed of CUL5, Elongin BC (ELOB and ELOC), RNF7/RBX2 and a variable SOCS box domain-containing protein as substrate-specific recognition component. CUL5-containing ECS complexes specifically contain RNF7/RBX2, and not RBX1, as catalytic subunit. Component of the ECS(ASB2) complex with the substrate recognition component ASB2. Component of the ECS(ASB6) complex with the substrate recognition component ASB6. Component of the ECS(ASB7) complex with the substrate recognition component ASB7. Component of the ECS(ASB9) complex with the substrate recognition component ASB9. Component of the ECS(ASB11) complex with the substrate recognition component ASB11. Component of the ECS(ASB12) complex with the substrate recognition component ASB12. Component of the ECS(LRRC41) complex with the substrate recognition component LRRC41. Component of the ECS(SOCS1) complex with the substrate recognition component SOCS1. Component of the ECS(SOCS2) complex with the substrate recognition component SOCS2. Component of the ECS(WSB1) complex with the substrate recognition subunit WSB1. Component of the ECS(SOCS3) complex with the substrate recognition component SOCS3. Component of the ECS(SOCS7) complex with the substrate recognition component SOCS7. Component of the ECS(SPSB1) complex with the substrate recognition component SPSB1. Component of the ECS(SPSB3) complex with the substrate recognition component SPSB3. Component of the ECS(SPSB2) complex with the substrate recognition component SPSB2. Component of the ECS(SPSB4) complex with the substrate recognition component SPSB4. Component of the ECS(RAB40) complex with the substrate recognition subunit RAB40A, RAB40B or RAB40C. Component of the ECS(KLHDC1) complex with the substrate recognition component KLHDC1. Component of the ECS(PCMTD1) complex with the substrate recognition subunit PCMTD1. May also form complexes containing RBX1 and ELOA or VHL; additional evidence is however required to confirm this result in vivo. Interacts (when neddylated) with ARIH2; leading to activate the E3 ligase activity of ARIH2. Interacts with ERCC6; the interaction is induced by DNA damaging agents or inhibitors of RNA polymerase II elongation. Interacts with ELOA (via the BC-box). Interacts (unneddylated form) with DCUN1D1, DCUN1D2, DCUN1D3, DCUN1D4 and DCUN1D5; these interactions promote the cullin neddylation. (Microbial infection) Interacts (via the substrate recognition component) with HIV-1 Vif; forming an active cullin-5-RING E3 ubiquitin-protein ligase complex (ECS complex). In terms of assembly, (Microbial infection) Interacts (via the substrate recognition component) with human adenovirus 5 proteins E1B-55K and E4-orf6. As to quaternary structure, (Microbial infection) Interacts with herpes virus 8 protein LANA1; this interaction promotes the degradation of NF-kappa-B component RELA. (Microbial infection) Interacts with molluscum contagiosum virus protein MC132; this interaction promotes the degradation of NF-kappa-B component RELA. Neddylated; which enhances the ubiquitination activity of ECS complexes and prevents binding of the inhibitor CAND1. Deneddylated via its interaction with the COP9 signalosome (CSN).

Its subcellular location is the nucleus. It functions in the pathway protein modification; protein ubiquitination. Functionally, core component of multiple cullin-5-RING E3 ubiquitin-protein ligase complexes (ECS complexes, also named CRL5 complexes), which mediate the ubiquitination and subsequent proteasomal degradation of target proteins. Acts a scaffold protein that contributes to catalysis through positioning of the substrate and the ubiquitin-conjugating enzyme. The functional specificity of the E3 ubiquitin-protein ligase complex depends on the variable SOCS box-containing substrate recognition component. Acts as a key regulator of neuron positioning during cortex development: component of various SOCS-containing ECS complexes, such as the ECS(SOCS7) complex, that regulate reelin signaling by mediating ubiquitination and degradation of DAB1. ECS(SOCS1) seems to direct ubiquitination of JAK2. The ECS(SOCS2) complex mediates the ubiquitination and subsequent proteasomal degradation of phosphorylated EPOR and GHR. The ECS(SPSB3) complex catalyzes ubiquitination of nuclear CGAS. ECS(KLHDC1) complex is part of the DesCEND (destruction via C-end degrons) pathway and mediates ubiquitination and degradation of truncated SELENOS selenoprotein produced by failed UGA/Sec decoding, which ends with a glycine. The ECS(ASB9) complex mediates ubiquitination and degradation of CKB. As part of some ECS complex, promotes 'Lys-11'-linked ubiquitination and degradation of BTRC. As part of a multisubunit ECS complex, polyubiquitinates monoubiquitinated POLR2A. As part of the ECS(RAB40C) complex, mediates ANKRD28 ubiquitination and degradation, thereby inhibiting protein phosphatase 6 (PP6) complex activity and focal adhesion assembly during cell migration. As part of the ECS(RAB40A) complex, mediates RHOU 'Lys-48'-linked ubiquitination and degradation, thus inhibiting focal adhesion disassembly during cell migration. As part of the ECS(RAB40B) complex, mediates LIMA1/EPLIN and RAP2 ubiquitination, thereby regulating actin cytoskeleton dynamics and stress fiber formation during cell migration. May form a cell surface vasopressin receptor. (Microbial infection) Following infection by HIV-1 virus, CUL5 associates with HIV-1 Vif proteins and forms a cullin-5-RING E3 ubiquitin-protein ligase complex (ECS complex) that catalyzes ubiquitination and degradation of APOBEC3F and APOBEC3G. The complex can also ubiquitinate APOBEC3H to some extent. In terms of biological role, (Microbial infection) Seems to be involved in proteasomal degradation of p53/TP53 stimulated by adenovirus E1B-55 kDa protein. The sequence is that of Cullin-5 from Homo sapiens (Human).